Consider the following 415-residue polypeptide: MMQQPPPASNGAATGPGQIPSDQQAYLQQQQSWMMQHQQQQQGQPPAGWNQQSAPSSGQPQQQQYGGGGSQNPGSAGEIRSLWIGDLQPWMDENYLMNVFGLTGEATAAKVIRNKQNGYSEGYGFIEFVNHATAERNLQTYNGAPMPSSEQAFRLNWAQLGAGERRQAEGPEHTVFVGDLAPDVTDHMLTETFKAVYSSVKGAKVVNDRTTGRSKGYGFVRFADESEQIRAMTEMNGQYCSSRPMRTGPAANKKPLTMQPASYQNTQGNSGESDPTNTTIFVGAVDQSVTEDDLKSVFGQFGELVHVKIPAGKRCGFVQYANRACAEQALSVLNGTQLGGQSIRLSWGRSPSNKQTQPDQAQYGGGGGYYGYPPQGYEAYGYAPPPQDPNAYYGGYAGGGYGNYQQPGGYQQQQQ.

The tract at residues 1-77 (MMQQPPPASN…GGSQNPGSAG (77 aa)) is disordered. Residues 23-64 (QQAYLQQQQSWMMQHQQQQQGQPPAGWNQQSAPSSGQPQQQQ) are compositionally biased toward low complexity. RRM domains are found at residues 80–160 (RSLW…WAQL), 173–252 (HTVF…PAAN), and 278–350 (TTIF…WGRS). Polar residues predominate over residues 344 to 356 (RLSWGRSPSNKQT). Positions 344-369 (RLSWGRSPSNKQTQPDQAQYGGGGGY) are disordered.

Belongs to the polyadenylate-binding RBP45 family. Interacts with the poly(A) tail of mRNA in nucleus. Mostly expressed in seedlings and stems, and, to a lower extent, in leaves and flowers.

The protein resides in the nucleus. In terms of biological role, heterogeneous nuclear ribonucleoprotein (hnRNP)-protein binding the poly(A) tail of mRNA and probably involved in some steps of pre-mRNA maturation. The protein is Polyadenylate-binding protein RBP45C (RBP45C) of Arabidopsis thaliana (Mouse-ear cress).